Here is a 208-residue protein sequence, read N- to C-terminus: Phosphoheptose isomerase (208 aa).

Positions 38–200 constitute an SIS domain; the sequence is MALTLARGRK…LFENVLALQP (163 aa). Residue 53 to 55 coordinates substrate; that stretch reads NGG. Positions 62 and 66 each coordinate Zn(2+). Residues Glu66, 95-96, 121-123, Ser126, and Gln173 contribute to the substrate site; these read ND and STS. Residues Gln173 and His181 each coordinate Zn(2+).

It belongs to the SIS family. GmhA subfamily. As to quaternary structure, homotetramer. The cofactor is Zn(2+).

It localises to the cytoplasm. The catalysed reaction is 2 D-sedoheptulose 7-phosphate = D-glycero-alpha-D-manno-heptose 7-phosphate + D-glycero-beta-D-manno-heptose 7-phosphate. It participates in carbohydrate biosynthesis; D-glycero-D-manno-heptose 7-phosphate biosynthesis; D-glycero-alpha-D-manno-heptose 7-phosphate and D-glycero-beta-D-manno-heptose 7-phosphate from sedoheptulose 7-phosphate: step 1/1. Catalyzes the isomerization of sedoheptulose 7-phosphate in D-glycero-D-manno-heptose 7-phosphate. The chain is Phosphoheptose isomerase from Nitratidesulfovibrio vulgaris (strain DSM 19637 / Miyazaki F) (Desulfovibrio vulgaris).